The primary structure comprises 795 residues: Phenylalanine--tRNA ligase beta subunit (795 aa).

The region spanning 39–148 is the tRNA-binding domain; that stretch reads AGAFHGVVVG…ADAPLGTDIR (110 aa). In terms of domain architecture, B5 spans 401–476; that stretch reads PARATIALRR…RVYGYNNIPN (76 aa). Positions 454, 460, 463, and 464 each coordinate Mg(2+). An FDX-ACB domain is found at 701–794; that stretch reads SRFPANRRDI…LKQRFQASLR (94 aa).

This sequence belongs to the phenylalanyl-tRNA synthetase beta subunit family. Type 1 subfamily. As to quaternary structure, tetramer of two alpha and two beta subunits. Requires Mg(2+) as cofactor.

It is found in the cytoplasm. The catalysed reaction is tRNA(Phe) + L-phenylalanine + ATP = L-phenylalanyl-tRNA(Phe) + AMP + diphosphate + H(+). The polypeptide is Phenylalanine--tRNA ligase beta subunit (pheT) (Dickeya dadantii (strain 3937) (Erwinia chrysanthemi (strain 3937))).